The primary structure comprises 779 residues: Molybdenum cofactor sulfurase (779 aa).

Lys-247 is subject to N6-(pyridoxal phosphate)lysine. Cys-409 is a catalytic residue. The region spanning 624–779 is the MOSC domain; that stretch reads SQSLGLEGVR…LTCGDVIVVS (156 aa). Ser-732 carries the phosphoserine modification.

This sequence belongs to the class-V pyridoxal-phosphate-dependent aminotransferase family. MOCOS subfamily. Pyridoxal 5'-phosphate is required as a cofactor.

The catalysed reaction is Mo-molybdopterin + L-cysteine + AH2 = thio-Mo-molybdopterin + L-alanine + A + H2O. It functions in the pathway cofactor biosynthesis; molybdopterin biosynthesis. Sulfurates the molybdenum cofactor. Sulfation of molybdenum is essential for xanthine dehydrogenase (XDH) and aldehyde oxidase (ADO) enzymes in which molybdenum cofactor is liganded by 1 oxygen and 1 sulfur atom in active form. This is Molybdenum cofactor sulfurase from Drosophila mojavensis (Fruit fly).